Reading from the N-terminus, the 333-residue chain is DNA repair and recombination protein RadA (333 aa).

127–134 (GEFGSGKT) is an ATP binding site.

This sequence belongs to the eukaryotic RecA-like protein family.

Involved in DNA repair and in homologous recombination. Binds and assemble on single-stranded DNA to form a nucleoprotein filament. Hydrolyzes ATP in a ssDNA-dependent manner and promotes DNA strand exchange between homologous DNA molecules. This Pyrobaculum arsenaticum (strain DSM 13514 / JCM 11321 / PZ6) protein is DNA repair and recombination protein RadA.